A 126-amino-acid chain; its full sequence is Aspartate 1-decarboxylase (126 aa).

Ser-25 serves as the catalytic Schiff-base intermediate with substrate; via pyruvic acid. A Pyruvic acid (Ser) modification is found at Ser-25. Thr-57 is a binding site for substrate. Residue Tyr-58 is the Proton donor of the active site. 73 to 75 (GAA) provides a ligand contact to substrate.

Belongs to the PanD family. As to quaternary structure, heterooctamer of four alpha and four beta subunits. The cofactor is pyruvate. Post-translationally, is synthesized initially as an inactive proenzyme, which is activated by self-cleavage at a specific serine bond to produce a beta-subunit with a hydroxyl group at its C-terminus and an alpha-subunit with a pyruvoyl group at its N-terminus.

It is found in the cytoplasm. The catalysed reaction is L-aspartate + H(+) = beta-alanine + CO2. It participates in cofactor biosynthesis; (R)-pantothenate biosynthesis; beta-alanine from L-aspartate: step 1/1. Functionally, catalyzes the pyruvoyl-dependent decarboxylation of aspartate to produce beta-alanine. The polypeptide is Aspartate 1-decarboxylase (Yersinia pestis bv. Antiqua (strain Antiqua)).